A 141-amino-acid polypeptide reads, in one-letter code: Large ribosomal subunit protein uL11 (141 aa).

It belongs to the universal ribosomal protein uL11 family. In terms of assembly, part of the ribosomal stalk of the 50S ribosomal subunit. Interacts with L10 and the large rRNA to form the base of the stalk. L10 forms an elongated spine to which L12 dimers bind in a sequential fashion forming a multimeric L10(L12)X complex. One or more lysine residues are methylated.

In terms of biological role, forms part of the ribosomal stalk which helps the ribosome interact with GTP-bound translation factors. In Clostridioides difficile (strain 630) (Peptoclostridium difficile), this protein is Large ribosomal subunit protein uL11.